The sequence spans 148 residues: SsrA-binding protein (148 aa).

The disordered stretch occupies residues 119–148; that stretch reads AKGKKQHDKRQSMKEADWKREKQRLIKHTR. Over residues 127-142 the composition is skewed to basic and acidic residues; that stretch reads KRQSMKEADWKREKQR.

The protein belongs to the SmpB family.

It is found in the cytoplasm. In terms of biological role, required for rescue of stalled ribosomes mediated by trans-translation. Binds to transfer-messenger RNA (tmRNA), required for stable association of tmRNA with ribosomes. tmRNA and SmpB together mimic tRNA shape, replacing the anticodon stem-loop with SmpB. tmRNA is encoded by the ssrA gene; the 2 termini fold to resemble tRNA(Ala) and it encodes a 'tag peptide', a short internal open reading frame. During trans-translation Ala-aminoacylated tmRNA acts like a tRNA, entering the A-site of stalled ribosomes, displacing the stalled mRNA. The ribosome then switches to translate the ORF on the tmRNA; the nascent peptide is terminated with the 'tag peptide' encoded by the tmRNA and targeted for degradation. The ribosome is freed to recommence translation, which seems to be the essential function of trans-translation. This Neisseria gonorrhoeae (strain ATCC 700825 / FA 1090) protein is SsrA-binding protein.